The primary structure comprises 240 residues: Ribonuclease PH (240 aa).

Phosphate-binding positions include Arg-87 and 125–127; that span reads GTR.

This sequence belongs to the RNase PH family. In terms of assembly, homohexameric ring arranged as a trimer of dimers.

The catalysed reaction is tRNA(n+1) + phosphate = tRNA(n) + a ribonucleoside 5'-diphosphate. In terms of biological role, phosphorolytic 3'-5' exoribonuclease that plays an important role in tRNA 3'-end maturation. Removes nucleotide residues following the 3'-CCA terminus of tRNAs; can also add nucleotides to the ends of RNA molecules by using nucleoside diphosphates as substrates, but this may not be physiologically important. Probably plays a role in initiation of 16S rRNA degradation (leading to ribosome degradation) during starvation. The protein is Ribonuclease PH of Dictyoglomus turgidum (strain DSM 6724 / Z-1310).